The chain runs to 321 residues: MVKKIAVLTSGGDAPGMNAAIRGVVRAGLSEGLEVYGIQDGYYGLYHDRVIKLERRSVSEVINRGGTFLGSARFPEFKNPEVRAKCVETLKKYEIDALVVIGGDGSYMGAKLLTEEHGIACIGLPGTIDNDVAGTDYTIGFQTALETALEAIDRLRDTSTSHQRISIVEIMGRHCGDLTLSAALAGGCEYIIIPEKGFDKESLIRNIEDGFNKGKRHAIIAITELMTDVHQLAREIEERFGHETRAAVLGHTQRGGAPCAFDRILASRMGVYAVELLMQGYGGRCVGIQNEKLVHHDIIDAITNMRRPFKEEIFNTSRKLF.

Gly-12 contacts ATP. 22–26 (RGVVR) contacts ADP. ATP-binding positions include 73 to 74 (RF) and 103 to 106 (GDGS). Residue Asp-104 coordinates Mg(2+). Residue 127–129 (TID) coordinates substrate. Asp-129 serves as the catalytic Proton acceptor. Arg-156 is a binding site for ADP. Residues Arg-164 and 171–173 (MGR) each bind substrate. ADP-binding positions include 187-189 (GCE), Lys-213, and 215-217 (KRH). Substrate is bound by residues Glu-224, Arg-245, and 251-254 (HTQR).

Belongs to the phosphofructokinase type A (PFKA) family. ATP-dependent PFK group I subfamily. Prokaryotic clade 'B1' sub-subfamily. As to quaternary structure, homotetramer. Requires Mg(2+) as cofactor.

The protein resides in the cytoplasm. The enzyme catalyses beta-D-fructose 6-phosphate + ATP = beta-D-fructose 1,6-bisphosphate + ADP + H(+). Its pathway is carbohydrate degradation; glycolysis; D-glyceraldehyde 3-phosphate and glycerone phosphate from D-glucose: step 3/4. Allosterically activated by ADP and other diphosphonucleosides, and allosterically inhibited by phosphoenolpyruvate. Its function is as follows. Catalyzes the phosphorylation of D-fructose 6-phosphate to fructose 1,6-bisphosphate by ATP, the first committing step of glycolysis. This Glaesserella parasuis serovar 5 (strain SH0165) (Haemophilus parasuis) protein is ATP-dependent 6-phosphofructokinase.